Reading from the N-terminus, the 161-residue chain is tRNA-specific adenosine deaminase (161 aa).

One can recognise a CMP/dCMP-type deaminase domain in the interval 2 to 120 (TQDELYMKEA…GTLMNLLQEE (119 aa)). H53 serves as a coordination point for Zn(2+). E55 functions as the Proton donor in the catalytic mechanism. C83 and C86 together coordinate Zn(2+).

The protein belongs to the cytidine and deoxycytidylate deaminase family. Homodimer. Zn(2+) is required as a cofactor.

The catalysed reaction is adenosine(34) in tRNA + H2O + H(+) = inosine(34) in tRNA + NH4(+). Catalyzes the deamination of adenosine to inosine at the wobble position 34 of tRNA(Arg2). In Bacillus subtilis (strain 168), this protein is tRNA-specific adenosine deaminase.